The sequence spans 142 residues: Peptide methionine sulfoxide reductase MsrB (142 aa).

Positions 2–125 (IKKNKNDLNE…NSAAVQFIPY (124 aa)) constitute a MsrB domain. The active-site Nucleophile is Cys114.

It belongs to the MsrB Met sulfoxide reductase family.

The enzyme catalyses L-methionyl-[protein] + [thioredoxin]-disulfide + H2O = L-methionyl-(R)-S-oxide-[protein] + [thioredoxin]-dithiol. This Staphylococcus saprophyticus subsp. saprophyticus (strain ATCC 15305 / DSM 20229 / NCIMB 8711 / NCTC 7292 / S-41) protein is Peptide methionine sulfoxide reductase MsrB.